The following is a 349-amino-acid chain: MTDITPEASLRSLINSTTHKWIFVGGKGGVGKTTSSCSIAIQMALAQPTKQFLLISTDPAHNLSDAFNEKFGKDARKVTGMDNLSCMEIDPSAALKDVNDMAIANGGDDDGLSGLLQGGALADLTGSIPGIDEALSFMEVMKHIKKQEQGDGEHFDTVIFDTAPTGHTLRFLQLPTTLTKVLDKFGAIAGRLGPMLNSFAGNPNVDVLGKMNELKESVQKIKKQFTDPDLTTFVCVCISEFLSLYETERLIQELISYDMDVNSIIVNQLLFAESDKEHNCKRCQARWKMQKKYLSQIDELYEDFHIVKMPLCAGEIRGLENLKKFSCFLNNKYDPETDGELVYQLEQGL.

Position 27–34 (lysine 27–threonine 34) interacts with ATP. Residue aspartate 58 is part of the active site. ATP-binding residues include glutamate 240 and asparagine 267. The Zn(2+) site is built by cysteine 280 and cysteine 283.

This sequence belongs to the arsA ATPase family. In terms of assembly, homodimer. Component of the Golgi to ER traffic (GET) complex, which is composed of GET1, GET2 and GET3. Within the complex, GET1 and GET2 form a heterotetramer which is stabilized by phosphatidylinositol binding and which binds to the GET3 homodimer. Interacts with the chloride channel protein GEF1.

It is found in the cytoplasm. It localises to the endoplasmic reticulum. The protein localises to the golgi apparatus. Functionally, ATPase required for the post-translational delivery of tail-anchored (TA) proteins to the endoplasmic reticulum. Recognizes and selectively binds the transmembrane domain of TA proteins in the cytosol. This complex then targets to the endoplasmic reticulum by membrane-bound receptors GET1 and GET2, where the tail-anchored protein is released for insertion. This process is regulated by ATP binding and hydrolysis. ATP binding drives the homodimer towards the closed dimer state, facilitating recognition of newly synthesized TA membrane proteins. ATP hydrolysis is required for insertion. Subsequently, the homodimer reverts towards the open dimer state, lowering its affinity for the GET1-GET2 receptor, and returning it to the cytosol to initiate a new round of targeting. Cooperates with the HDEL receptor ERD2 to mediate the ATP-dependent retrieval of resident ER proteins that contain a C-terminal H-D-E-L retention signal from the Golgi to the ER. Involved in low-level resistance to the oxyanions arsenite and arsenate, and in heat tolerance. The sequence is that of ATPase GET3 from Eremothecium gossypii (strain ATCC 10895 / CBS 109.51 / FGSC 9923 / NRRL Y-1056) (Yeast).